Here is a 282-residue protein sequence, read N- to C-terminus: MPKKTATKANPKEVSDSENDSVVSEEEDNVPVTKGGKNAKASKAKPKEVSESDNSGSEQSEESEDEAPKKGKVNAKKAPAKKAPVKKGKQDSDSDNEEDEASEDGSDDEEDVVSADDSDSDEAPKGKAAKKAPAKKAPAKKAPAKKAPAKKGKAKDEDDESEDEAPKKGKGKGKATKKDGDKPKKPLSDYQKFLSKRMPELREEEPGKPYKEYMKMAGAEWTEQNGGTKKKPAAKSGSKTAKKAPAKGGSKSTAKKAPAKKAPAKKAPAKKSKKEASDEESD.

The disordered stretch occupies residues 1–282 (MPKKTATKAN…KKEASDEESD (282 aa)). The segment covering 16-29 (DSENDSVVSEEEDN) has biased composition (acidic residues). The span at 70–87 (KGKVNAKKAPAKKAPVKK) shows a compositional bias: basic residues. Acidic residues predominate over residues 93–121 (DSDNEEDEASEDGSDDEEDVVSADDSDSD). Over residues 127-153 (KAAKKAPAKKAPAKKAPAKKAPAKKGK) the composition is skewed to basic residues. Basic and acidic residues-rich tracts occupy residues 176–187 (TKKDGDKPKKPL) and 197–214 (RMPE…KEYM). A DNA-binding region (HMG box) is located at residues 183–252 (PKKPLSDYQK…KAPAKGGSKS (70 aa)). Over residues 253–273 (TAKKAPAKKAPAKKAPAKKSK) the composition is skewed to basic residues.

The sequence is that of HMG box-containing protein R545 from Acanthamoeba polyphaga mimivirus (APMV).